The primary structure comprises 184 residues: NADH-quinone oxidoreductase subunit J (184 aa).

A helical transmembrane segment spans residues 1-21; it reads MEFAFYICGLIAILATLRVIT. The Cytoplasmic segment spans residues 22 to 27; sequence HTNPVH. Residues 28–48 traverse the membrane as a helical segment; it reads ALLYLIISLLAISGVFFSLGA. Topologically, residues 49–53 are periplasmic; the sequence is YFAGA. A helical transmembrane segment spans residues 54–74; the sequence is LEIIVYAGAIMVLFVFVVMML. The Cytoplasmic segment spans residues 75–91; it reads NLGGSEIEQERQWLKPQ. The chain crosses the membrane as a helical span at residues 92 to 112; it reads VWIGPAILSAIMLVVIVYAIL. Residues 113 to 137 are Periplasmic-facing; that stretch reads GVNDQGIDGTPISAKAVGITLFGPY. Residues 138-158 form a helical membrane-spanning segment; sequence VLAVELASMLLLAGLVVAFHV. The Cytoplasmic portion of the chain corresponds to 159–184; that stretch reads GREERAGEVLSNRKDDSAKRKTEEHA.

Belongs to the complex I subunit 6 family. In terms of assembly, composed of 13 different subunits. Subunits NuoA, H, J, K, L, M, N constitute the membrane sector of the complex.

It is found in the cell inner membrane. It catalyses the reaction a quinone + NADH + 5 H(+)(in) = a quinol + NAD(+) + 4 H(+)(out). Its function is as follows. NDH-1 shuttles electrons from NADH, via FMN and iron-sulfur (Fe-S) centers, to quinones in the respiratory chain. The immediate electron acceptor for the enzyme in this species is believed to be ubiquinone. Couples the redox reaction to proton translocation (for every two electrons transferred, four hydrogen ions are translocated across the cytoplasmic membrane), and thus conserves the redox energy in a proton gradient. In Escherichia coli O157:H7, this protein is NADH-quinone oxidoreductase subunit J (nuoJ).